The chain runs to 181 residues: TATA-box-binding protein (181 aa).

2 consecutive repeat copies span residues 7 to 83 (IVNV…IKEL) and 98 to 173 (VQNM…SKTL).

The protein belongs to the TBP family.

Functionally, general factor that plays a role in the activation of archaeal genes transcribed by RNA polymerase. Binds specifically to the TATA box promoter element which lies close to the position of transcription initiation. In Methanococcus maripaludis (strain C6 / ATCC BAA-1332), this protein is TATA-box-binding protein.